Reading from the N-terminus, the 187-residue chain is Putative manganese efflux pump MntP (187 aa).

The next 6 helical transmembrane spans lie at 3–23 (YYTL…VSVG), 39–59 (IALC…YVGS), 65–85 (ISEF…INMI), 106–126 (LTML…SFAF), 129–149 (VNIW…SLFG), and 166–186 (LLGG…HRVF).

It belongs to the MntP (TC 9.B.29) family.

The protein resides in the cell inner membrane. Probably functions as a manganese efflux pump. In Actinobacillus succinogenes (strain ATCC 55618 / DSM 22257 / CCUG 43843 / 130Z), this protein is Putative manganese efflux pump MntP.